A 141-amino-acid chain; its full sequence is Hemoglobin subunit alpha (141 aa).

Residues 1–141 (VLSSDDKCNV…VSSVLTSKYR (141 aa)) form the Globin domain. Histidine 58 serves as a coordination point for O2. A heme b-binding site is contributed by histidine 87.

Belongs to the globin family. In terms of assembly, heterotetramer of two alpha chains and two beta chains. In terms of tissue distribution, red blood cells.

Functionally, involved in oxygen transport from the lung to the various peripheral tissues. This chain is Hemoglobin subunit alpha (HBA), found in Crocodylus niloticus (Nile crocodile).